A 159-amino-acid chain; its full sequence is Probable histone H2A.5 (159 aa).

Positions 1-10 (MDAAGAGAGG) are enriched in gly residues. 2 disordered regions span residues 1–29 (MDAAGAGAGGKLKKGAAGRKAGGPRKKAV) and 136–159 (EKAAAAGKEAKSPKKAAGKSPKKA). Composition is skewed to basic residues over residues 11-29 (KLKKGAAGRKAGGPRKKAV) and 148-159 (PKKAAGKSPKKA). 2 short sequence motifs (SPKK motif) span residues 147–150 (SPKK) and 155–158 (SPKK).

This sequence belongs to the histone H2A family. The nucleosome is a histone octamer containing two molecules each of H2A, H2B, H3 and H4 assembled in one H3-H4 heterotetramer and two H2A-H2B heterodimers. The octamer wraps approximately 147 bp of DNA.

Its subcellular location is the nucleus. The protein resides in the chromosome. Core component of nucleosome. Nucleosomes wrap and compact DNA into chromatin, limiting DNA accessibility to the cellular machineries which require DNA as a template. Histones thereby play a central role in transcription regulation, DNA repair, DNA replication and chromosomal stability. DNA accessibility is regulated via a complex set of post-translational modifications of histones, also called histone code, and nucleosome remodeling. The chain is Probable histone H2A.5 from Oryza sativa subsp. indica (Rice).